The primary structure comprises 339 residues: DNA-directed RNA polymerase subunit alpha (339 aa).

The alpha N-terminal domain (alpha-NTD) stretch occupies residues 1-233; it reads MVREEVAGST…DLFLPFLHAE (233 aa). The interval 266-339 is alpha C-terminal domain (alpha-CTD); it reads GIPLNCIFID…IDLLKNKLSF (74 aa).

Belongs to the RNA polymerase alpha chain family. In terms of assembly, in plastids the minimal PEP RNA polymerase catalytic core is composed of four subunits: alpha, beta, beta', and beta''. When a (nuclear-encoded) sigma factor is associated with the core the holoenzyme is formed, which can initiate transcription.

It localises to the plastid. The protein localises to the chloroplast. The enzyme catalyses RNA(n) + a ribonucleoside 5'-triphosphate = RNA(n+1) + diphosphate. DNA-dependent RNA polymerase catalyzes the transcription of DNA into RNA using the four ribonucleoside triphosphates as substrates. The protein is DNA-directed RNA polymerase subunit alpha of Psathyrostachys juncea (Russian wildrye).